A 201-amino-acid polypeptide reads, in one-letter code: Small ribosomal subunit protein uS4c (201 aa).

The S4 RNA-binding domain maps to 89 to 157 (MRLDNILFRL…VQNYIASSDP (69 aa)).

The protein belongs to the universal ribosomal protein uS4 family. Part of the 30S ribosomal subunit. Contacts protein S5. The interaction surface between S4 and S5 is involved in control of translational fidelity.

It localises to the plastid. The protein resides in the chloroplast. One of the primary rRNA binding proteins, it binds directly to 16S rRNA where it nucleates assembly of the body of the 30S subunit. Its function is as follows. With S5 and S12 plays an important role in translational accuracy. This chain is Small ribosomal subunit protein uS4c (rps4), found in Hordeum vulgare (Barley).